A 239-amino-acid polypeptide reads, in one-letter code: tRNA (guanine-N(1)-)-methyltransferase (239 aa).

Residues G108 and 127-132 (LGDYVL) each bind S-adenosyl-L-methionine.

This sequence belongs to the RNA methyltransferase TrmD family. As to quaternary structure, homodimer.

It localises to the cytoplasm. It carries out the reaction guanosine(37) in tRNA + S-adenosyl-L-methionine = N(1)-methylguanosine(37) in tRNA + S-adenosyl-L-homocysteine + H(+). Specifically methylates guanosine-37 in various tRNAs. This is tRNA (guanine-N(1)-)-methyltransferase from Streptococcus pneumoniae (strain JJA).